The primary structure comprises 297 residues: HTH-type transcriptional regulator ArgP (297 aa).

The HTH lysR-type domain maps to 4–60 (PDYRTLQALDAVIRERGFERAAQKLCITQSAVSQRIKQLENMFGQPLLVRTVPPRPT). Residues 21–40 (FERAAQKLCITQSAVSQRIK) constitute a DNA-binding region (H-T-H motif).

The protein belongs to the LysR transcriptional regulatory family. In terms of assembly, homodimer.

Functionally, controls the transcription of genes involved in arginine and lysine metabolism. In Escherichia fergusonii (strain ATCC 35469 / DSM 13698 / CCUG 18766 / IAM 14443 / JCM 21226 / LMG 7866 / NBRC 102419 / NCTC 12128 / CDC 0568-73), this protein is HTH-type transcriptional regulator ArgP.